Consider the following 273-residue polypeptide: Chaperone protein PsaB (273 aa).

The first 31 residues, 1–31 (MKNLFFSAYKKVFSYITSIVIFMVSLPYAYS), serve as a signal peptide directing secretion. Cys-128 and Cys-163 are oxidised to a cystine.

Belongs to the periplasmic pilus chaperone family.

Its subcellular location is the periplasm. Functionally, required for the biogenesis of the pH 6 antigen. The protein is Chaperone protein PsaB (psaB) of Yersinia pestis.